The following is a 208-amino-acid chain: dTTP/UTP pyrophosphatase (208 aa).

Aspartate 79 functions as the Proton acceptor in the catalytic mechanism.

It belongs to the Maf family. YhdE subfamily. A divalent metal cation serves as cofactor.

The protein localises to the cytoplasm. The enzyme catalyses dTTP + H2O = dTMP + diphosphate + H(+). It carries out the reaction UTP + H2O = UMP + diphosphate + H(+). Functionally, nucleoside triphosphate pyrophosphatase that hydrolyzes dTTP and UTP. May have a dual role in cell division arrest and in preventing the incorporation of modified nucleotides into cellular nucleic acids. The chain is dTTP/UTP pyrophosphatase from Mesorhizobium japonicum (strain LMG 29417 / CECT 9101 / MAFF 303099) (Mesorhizobium loti (strain MAFF 303099)).